We begin with the raw amino-acid sequence, 652 residues long: DNA ligase (652 aa).

NAD(+) is bound by residues 29–33 (DSEYD), 78–79 (SL), and Glu-107. Lys-109 (N6-AMP-lysine intermediate) is an active-site residue. Arg-130, Glu-164, Lys-278, and Lys-302 together coordinate NAD(+). Zn(2+) is bound by residues Cys-395, Cys-398, Cys-413, and Cys-418. One can recognise a BRCT domain in the interval 577–652 (DQQAALFGLT…IEDEDWLLNL (76 aa)).

This sequence belongs to the NAD-dependent DNA ligase family. LigA subfamily. The cofactor is Mg(2+). Requires Mn(2+) as cofactor.

It catalyses the reaction NAD(+) + (deoxyribonucleotide)n-3'-hydroxyl + 5'-phospho-(deoxyribonucleotide)m = (deoxyribonucleotide)n+m + AMP + beta-nicotinamide D-nucleotide.. Functionally, DNA ligase that catalyzes the formation of phosphodiester linkages between 5'-phosphoryl and 3'-hydroxyl groups in double-stranded DNA using NAD as a coenzyme and as the energy source for the reaction. It is essential for DNA replication and repair of damaged DNA. This Streptococcus equi subsp. equi (strain 4047) protein is DNA ligase.